Here is a 368-residue protein sequence, read N- to C-terminus: Agmatine deiminase (368 aa).

The active-site Amidino-cysteine intermediate is cysteine 357.

This sequence belongs to the agmatine deiminase family. In terms of assembly, homodimer.

It carries out the reaction agmatine + H2O = N-carbamoylputrescine + NH4(+). It functions in the pathway amine and polyamine biosynthesis; putrescine biosynthesis via agmatine pathway; N-carbamoylputrescine from agmatine: step 1/1. Mediates the hydrolysis of agmatine into N-carbamoylputrescine in the arginine decarboxylase (ADC) pathway of putrescine biosynthesis, a basic polyamine. The chain is Agmatine deiminase from Pseudomonas fluorescens (strain SBW25).